The primary structure comprises 807 residues: Glycerol-3-phosphate acyltransferase (807 aa).

The short motif at 309–314 (CHRSHM) is the HXXXXD motif element.

Belongs to the GPAT/DAPAT family.

Its subcellular location is the cell inner membrane. The enzyme catalyses sn-glycerol 3-phosphate + an acyl-CoA = a 1-acyl-sn-glycero-3-phosphate + CoA. It functions in the pathway phospholipid metabolism; CDP-diacylglycerol biosynthesis; CDP-diacylglycerol from sn-glycerol 3-phosphate: step 1/3. In Aeromonas hydrophila subsp. hydrophila (strain ATCC 7966 / DSM 30187 / BCRC 13018 / CCUG 14551 / JCM 1027 / KCTC 2358 / NCIMB 9240 / NCTC 8049), this protein is Glycerol-3-phosphate acyltransferase.